Reading from the N-terminus, the 585-residue chain is Folylpolyglutamate synthase, mitochondrial (585 aa).

The transit peptide at 1 to 39 (MSRARCHALFLAAVSPRGATTRVAVRRGLSAWPVLQEPD) directs the protein to the mitochondrion. Residue 103–106 (GKGS) coordinates ATP. Ser-127, Glu-198, and His-226 together coordinate Mg(2+). 2 residues coordinate ATP: Arg-361 and Asp-375. Residues 477–497 (EEQVSPDPWSTPGQEQDGPAS) form a disordered region. Ser-537 carries the post-translational modification Phosphoserine.

This sequence belongs to the folylpolyglutamate synthase family. As to quaternary structure, monomer. A monovalent cation is required as a cofactor.

The protein resides in the mitochondrion inner membrane. It localises to the mitochondrion matrix. It is found in the cytoplasm. It catalyses the reaction (6S)-5,6,7,8-tetrahydrofolyl-(gamma-L-Glu)(n) + L-glutamate + ATP = (6S)-5,6,7,8-tetrahydrofolyl-(gamma-L-Glu)(n+1) + ADP + phosphate + H(+). It participates in cofactor biosynthesis; tetrahydrofolylpolyglutamate biosynthesis. Its function is as follows. Catalyzes conversion of folates to polyglutamate derivatives allowing concentration of folate compounds in the cell and the intracellular retention of these cofactors, which are important substrates for most of the folate-dependent enzymes that are involved in one-carbon transfer reactions involved in purine, pyrimidine and amino acid synthesis. In Bos taurus (Bovine), this protein is Folylpolyglutamate synthase, mitochondrial (FPGS).